Here is a 360-residue protein sequence, read N- to C-terminus: MSEAPVYTLKQLAELLQVEVQGNIETPISGVEDISQAQPHHIAFLDNEKYSSFLKNTKAGAIILSRSQAMQHAHLKKNFLITNESPSLTFQKCIELFIEPVTSGFPGIHPTAVIHPTARIEKNVTIEPYVVISQHAHIGSDTYIGAGSVIGAHSVLGANCLIHPKVVIRERVLMGNRVVVQPGAVLGSCGFGYITNAFGHHKPLKHLGYVIVGDDVEIGANTTIDRGRFKNTVIHEGTKIDNQVQVAHHVEIGKHSIIVAQAGIAGSTKIGEHVIIGGQTGITGHISIADHVIMIAQTGVTKSITSPGIYGGAPARPYQETHRLIAKIRNLPKTEERLSKLEKQVRDLSTPSLAEIPSEI.

The Proton acceptor role is filled by His-248.

It belongs to the transferase hexapeptide repeat family. LpxD subfamily. As to quaternary structure, homotrimer.

It catalyses the reaction a UDP-3-O-[(3R)-3-hydroxyacyl]-alpha-D-glucosamine + a (3R)-hydroxyacyl-[ACP] = a UDP-2-N,3-O-bis[(3R)-3-hydroxyacyl]-alpha-D-glucosamine + holo-[ACP] + H(+). Its pathway is bacterial outer membrane biogenesis; LPS lipid A biosynthesis. Its function is as follows. Catalyzes the N-acylation of UDP-3-O-acylglucosamine using 3-hydroxyacyl-ACP as the acyl donor. Is involved in the biosynthesis of lipid A, a phosphorylated glycolipid that anchors the lipopolysaccharide to the outer membrane of the cell. The protein is UDP-3-O-acylglucosamine N-acyltransferase of Chlamydia pneumoniae (Chlamydophila pneumoniae).